The following is a 360-amino-acid chain: Archaemetzincin-2 (360 aa).

Position 254 (His254) interacts with Zn(2+). Glu255 functions as the Proton acceptor in the catalytic mechanism. Residues His258, His264, Cys265, Cys270, Cys289, and Cys292 each contribute to the Zn(2+) site.

The protein belongs to the peptidase M54 family. Requires Zn(2+) as cofactor. Down-regulated in testis from patients with maturation arrest (MA) or Sertoli cell-only syndrome (SCOS).

Its function is as follows. Probable zinc metalloprotease. The sequence is that of Archaemetzincin-2 (AMZ2) from Homo sapiens (Human).